Here is a 489-residue protein sequence, read N- to C-terminus: 3-octaprenyl-4-hydroxybenzoate carboxy-lyase (489 aa).

Asparagine 172 provides a ligand contact to Mn(2+). Prenylated FMN-binding positions include 175–177 (IYR), 189–191 (RWL), and 194–195 (RG). Glutamate 238 serves as a coordination point for Mn(2+). Residue aspartate 287 is the Proton donor of the active site.

The protein belongs to the UbiD family. As to quaternary structure, homohexamer. Requires prenylated FMN as cofactor. The cofactor is Mn(2+).

The protein localises to the cell membrane. The enzyme catalyses a 4-hydroxy-3-(all-trans-polyprenyl)benzoate + H(+) = a 2-(all-trans-polyprenyl)phenol + CO2. The protein operates within cofactor biosynthesis; ubiquinone biosynthesis. Functionally, catalyzes the decarboxylation of 3-octaprenyl-4-hydroxy benzoate to 2-octaprenylphenol, an intermediate step in ubiquinone biosynthesis. In Salmonella paratyphi B (strain ATCC BAA-1250 / SPB7), this protein is 3-octaprenyl-4-hydroxybenzoate carboxy-lyase.